The chain runs to 205 residues: Nucleoside triphosphate pyrophosphatase (205 aa).

The active-site Proton acceptor is the D76.

The protein belongs to the Maf family. The cofactor is a divalent metal cation.

The protein resides in the cytoplasm. The catalysed reaction is a ribonucleoside 5'-triphosphate + H2O = a ribonucleoside 5'-phosphate + diphosphate + H(+). It carries out the reaction a 2'-deoxyribonucleoside 5'-triphosphate + H2O = a 2'-deoxyribonucleoside 5'-phosphate + diphosphate + H(+). Nucleoside triphosphate pyrophosphatase. May have a dual role in cell division arrest and in preventing the incorporation of modified nucleotides into cellular nucleic acids. The chain is Nucleoside triphosphate pyrophosphatase from Orientia tsutsugamushi (strain Boryong) (Rickettsia tsutsugamushi).